A 431-amino-acid chain; its full sequence is Glutamate--tRNA ligase 1 (431 aa).

Residues 6–16 (PSPTGDMHIGN) carry the 'HIGH' region motif. A 'KMSKS' region motif is present at residues 235–239 (KMSKR). K238 contributes to the ATP binding site.

Belongs to the class-I aminoacyl-tRNA synthetase family. Glutamate--tRNA ligase type 1 subfamily. Monomer.

It localises to the cytoplasm. It carries out the reaction tRNA(Glu) + L-glutamate + ATP = L-glutamyl-tRNA(Glu) + AMP + diphosphate. Functionally, catalyzes the attachment of glutamate to tRNA(Glu) in a two-step reaction: glutamate is first activated by ATP to form Glu-AMP and then transferred to the acceptor end of tRNA(Glu). The protein is Glutamate--tRNA ligase 1 of Campylobacter jejuni subsp. jejuni serotype O:23/36 (strain 81-176).